The primary structure comprises 463 residues: Bifunctional protein GlmU (463 aa).

Residues 1 to 233 (MSKKSTFIIL…NFEVMGINSR (233 aa)) form a pyrophosphorylase region. Residues 10–13 (LAAG), Lys-24, Gln-76, 81–82 (GT), 104–106 (YGD), Gly-143, Glu-158, Asn-173, and Asn-231 contribute to the UDP-N-acetyl-alpha-D-glucosamine site. A Mg(2+)-binding site is contributed by Asp-106. Asn-231 lines the Mg(2+) pocket. A linker region spans residues 234–254 (YELFVAEQELKLRINKEHLSK). An N-acetyltransferase region spans residues 255-463 (GVQIIDIYST…LRRKQMYENR (209 aa)). UDP-N-acetyl-alpha-D-glucosamine contacts are provided by Arg-336 and Lys-354. His-366 serves as the catalytic Proton acceptor. Positions 369 and 380 each coordinate UDP-N-acetyl-alpha-D-glucosamine. Acetyl-CoA contacts are provided by residues 389-390 (NY), Ala-426, and Arg-443.

In the N-terminal section; belongs to the N-acetylglucosamine-1-phosphate uridyltransferase family. It in the C-terminal section; belongs to the transferase hexapeptide repeat family. In terms of assembly, homotrimer. It depends on Mg(2+) as a cofactor.

It is found in the cytoplasm. The enzyme catalyses alpha-D-glucosamine 1-phosphate + acetyl-CoA = N-acetyl-alpha-D-glucosamine 1-phosphate + CoA + H(+). It catalyses the reaction N-acetyl-alpha-D-glucosamine 1-phosphate + UTP + H(+) = UDP-N-acetyl-alpha-D-glucosamine + diphosphate. The protein operates within nucleotide-sugar biosynthesis; UDP-N-acetyl-alpha-D-glucosamine biosynthesis; N-acetyl-alpha-D-glucosamine 1-phosphate from alpha-D-glucosamine 6-phosphate (route II): step 2/2. Its pathway is nucleotide-sugar biosynthesis; UDP-N-acetyl-alpha-D-glucosamine biosynthesis; UDP-N-acetyl-alpha-D-glucosamine from N-acetyl-alpha-D-glucosamine 1-phosphate: step 1/1. It functions in the pathway bacterial outer membrane biogenesis; LPS lipid A biosynthesis. Functionally, catalyzes the last two sequential reactions in the de novo biosynthetic pathway for UDP-N-acetylglucosamine (UDP-GlcNAc). The C-terminal domain catalyzes the transfer of acetyl group from acetyl coenzyme A to glucosamine-1-phosphate (GlcN-1-P) to produce N-acetylglucosamine-1-phosphate (GlcNAc-1-P), which is converted into UDP-GlcNAc by the transfer of uridine 5-monophosphate (from uridine 5-triphosphate), a reaction catalyzed by the N-terminal domain. This chain is Bifunctional protein GlmU, found in Caldicellulosiruptor saccharolyticus (strain ATCC 43494 / DSM 8903 / Tp8T 6331).